We begin with the raw amino-acid sequence, 336 residues long: 3-hydroxyisobutyrate dehydrogenase, mitochondrial (336 aa).

A mitochondrion-targeting transit peptide spans 1–36; sequence MAASLRLRGAASGLRYWSRRQPPAVASLAAVCSRSM. 40-69 is an NAD(+) binding site; the sequence is TPVGFIGVGNMGNPMAKNLMKHGYPLIIYD. N6-acetyllysine; alternate is present on residues lysine 60 and lysine 76. 2 positions are modified to N6-succinyllysine; alternate: lysine 60 and lysine 76. An N6-succinyllysine modification is found at lysine 95. Residues 103–104 and asparagine 108 each bind NAD(+); that span reads LP. Residue lysine 121 is modified to N6-acetyllysine. Threonine 134 is an NAD(+) binding site. Lysine 141 is subject to N6-succinyllysine. Position 145 is an N6-acetyllysine (lysine 145). Lysine 149 bears the N6-acetyllysine; alternate mark. Lysine 149 is modified (N6-succinyllysine; alternate). Lysine 209 is an active-site residue. 2 positions are modified to N6-acetyllysine; alternate: lysine 238 and lysine 242. An N6-succinyllysine; alternate mark is found at lysine 238 and lysine 242. An NAD(+)-binding site is contributed by lysine 284. Lysine 297 carries the post-translational modification N6-succinyllysine. Lysine 321 is modified (N6-acetyllysine; alternate). Lysine 321 carries the N6-succinyllysine; alternate modification.

Belongs to the HIBADH-related family. 3-hydroxyisobutyrate dehydrogenase subfamily. Homodimer.

It localises to the mitochondrion. The enzyme catalyses 3-hydroxy-2-methylpropanoate + NAD(+) = 2-methyl-3-oxopropanoate + NADH + H(+). It functions in the pathway amino-acid degradation; L-valine degradation. The sequence is that of 3-hydroxyisobutyrate dehydrogenase, mitochondrial (HIBADH) from Bos taurus (Bovine).